The primary structure comprises 235 residues: Casparian strip membrane protein 2 (235 aa).

At 1-70 (MTSESATVIQ…RSGAEGFRRC (70 aa)) the chain is on the cytoplasmic side. Residues 71-91 (LAVIDFLLRVAAFGPTLAAAI) traverse the membrane as a helical segment. The Extracellular segment spans residues 92 to 118 (STGTADERLSVFTNFFQFHARFDDFPA). A helical membrane pass occupies residues 119–139 (FTFFLVANAVAAGYLVLSLPF). Over 140 to 162 (SVVVILRPNKATGGVRLLLLLCD) the chain is Cytoplasmic. The helical transmembrane segment at 163 to 183 (VLIMALLTAAGAAAAAIVYVA) threads the bilayer. The Extracellular segment spans residues 184 to 210 (HSGNRRANWVPICMQFHGFCQRTSGSV). The chain crosses the membrane as a helical span at residues 211-231 (VATFLAVLVFIVLILMAACVI). Residues 232–235 (RRSK) lie on the Cytoplasmic side of the membrane.

This sequence belongs to the Casparian strip membrane proteins (CASP) family. In terms of assembly, homodimer and heterodimers.

It is found in the cell membrane. Its function is as follows. Regulates membrane-cell wall junctions and localized cell wall deposition. Required for establishment of the Casparian strip membrane domain (CSD) and the subsequent formation of Casparian strips, a cell wall modification of the root endodermis that determines an apoplastic barrier between the intraorganismal apoplasm and the extraorganismal apoplasm and prevents lateral diffusion. This Sorghum bicolor (Sorghum) protein is Casparian strip membrane protein 2.